The sequence spans 459 residues: Vasoactive intestinal polypeptide receptor 1 (459 aa).

A signal peptide spans 1–30 (MRPPSLPPARWLCVLAGALACALGPAGSRA). Over 31 to 142 (ASPHQECEYL…EQQQTEFYDA (112 aa)) the chain is Extracellular. 5 disulfide bridges follow: Cys-37-Cys-209, Cys-50-Cys-72, Cys-63-Cys-105, Cys-86-Cys-122, and Cys-216-Cys-286. 4 N-linked (GlcNAc...) asparagine glycosylation sites follow: Asn-58, Asn-69, Asn-100, and Asn-104. A helical membrane pass occupies residues 143-167 (VKTGYTIGYSLSLASLLVAMAILSL). At 168–175 (FRKLHCTR) the chain is on the cytoplasmic side. A helical transmembrane segment spans residues 176–197 (NYIHMHLFMSFILRATAVFIKD). Residues 198–217 (MALFNNGETDHCSEASVSCK) are Extracellular-facing. A helical transmembrane segment spans residues 218–242 (AAVVFFQYCVMANFFWLLVEGLYLH). At 243-255 (TLLAVSFFSERKY) the chain is on the cytoplasmic side. Residues 256–277 (FWGYILIGWGVPSVFIMIWTIV) traverse the membrane as a helical segment. Topologically, residues 278 to 293 (RIHFEDFGCWDTIINS) are extracellular. Residue Asn-292 is glycosylated (N-linked (GlcNAc...) asparagine). Residues 294 to 318 (SLWWIIKGPILISILVNFILFICII) form a helical membrane-spanning segment. Residues 319-340 (RILVQKLRPPDIGKNDSSPYSR) lie on the Cytoplasmic side of the membrane. A helical transmembrane segment spans residues 341–361 (LAKSTLLLIPLFGVHYVMFAF). The Extracellular portion of the chain corresponds to 362 to 369 (FPDNFKAQ). A helical membrane pass occupies residues 370–393 (VKMVFELVVGSFQGFVVAILYCFL). Over 394-459 (NGEVQAELRR…SSFQAEVSLV (66 aa)) the chain is Cytoplasmic.

This sequence belongs to the G-protein coupled receptor 2 family. In terms of assembly, interacts with ADCYAP1/PACAP; activated by both PACAP27 and PACAP38 neuropeptides. Interacts with VIP; the interaction results in VIPR1 activation.

It localises to the cell membrane. Its function is as follows. G protein-coupled receptor activated by the neuropeptides vasoactive intestinal peptide (VIP) and pituitary adenylate cyclase-activating polypeptide (ADCYAP1/PACAP). Binds VIP and both PACAP27 and PACAP38 bioactive peptides with the following order of ligand affinity VIP = PACAP27 &gt; PACAP38. Ligand binding causes a conformation change that triggers signaling via guanine nucleotide-binding proteins (G proteins) and modulates the activity of downstream effectors. Activates cAMP-dependent pathway. This is Vasoactive intestinal polypeptide receptor 1 from Mus musculus (Mouse).